Reading from the N-terminus, the 1017-residue chain is Integrator complex subunit 3 (1017 aa).

The interval 952–1017 (EYEDSSKPPK…KGSAVGSDSD (66 aa)) is disordered. Positions 983-997 (NEEESVSSSASEEED) are enriched in acidic residues.

This sequence belongs to the Integrator subunit 3 family. In terms of assembly, component of the Integrator complex, composed of core subunits INTS1, INTS2, INTS3, INTS4, INTS5, INTS6, INTS7, INTS8, INTS9/RC74, INTS10, INTS11/CPSF3L, INTS12, INTS13, INTS14 and INTS15. The core complex associates with protein phosphatase 2A subunits PPP2CA and PPP2R1A, to form the Integrator-PP2A (INTAC) complex. Component of the SOSS complex.

The protein resides in the nucleus. Its subcellular location is the cytoplasm. In terms of biological role, component of the integrator complex, a multiprotein complex that terminates RNA polymerase II (Pol II) transcription in the promoter-proximal region of genes. The integrator complex provides a quality checkpoint during transcription elongation by driving premature transcription termination of transcripts that are unfavorably configured for transcriptional elongation: the complex terminates transcription by (1) catalyzing dephosphorylation of the C-terminal domain (CTD) of Pol II subunit POLR2A/RPB1 and SUPT5H/SPT5, (2) degrading the exiting nascent RNA transcript via endonuclease activity and (3) promoting the release of Pol II from bound DNA. The integrator complex is also involved in terminating the synthesis of non-coding Pol II transcripts, such as enhancer RNAs (eRNAs), small nuclear RNAs (snRNAs), telomerase RNAs and long non-coding RNAs (lncRNAs). Within the integrator complex, INTS3 is involved in the post-termination step: INTS3 binds INTS7 in the open conformation of integrator complex and prevents the rebinding of Pol II to the integrator after termination cycle. Its function is as follows. Component of the SOSS complex, a multiprotein complex that functions downstream of the MRN complex to promote DNA repair and G2/M checkpoint. The SOSS complex associates with single-stranded DNA at DNA lesions and influences diverse endpoints in the cellular DNA damage response including cell-cycle checkpoint activation, recombinational repair and maintenance of genomic stability. The SOSS complex is required for efficient homologous recombination-dependent repair of double-strand breaks (DSBs) and ATM-dependent signaling pathways. In the SOSS complex, it is required for the assembly of the complex and for stabilization of the complex at DNA damage sites. This chain is Integrator complex subunit 3 (ints3), found in Danio rerio (Zebrafish).